The sequence spans 52 residues: DNA-directed RNA polymerase subunit Rpo12 (52 aa).

Zn(2+)-binding residues include Cys-13, Cys-30, and Cys-33.

Belongs to the archaeal Rpo12/eukaryotic RPC10 RNA polymerase subunit family. As to quaternary structure, part of the RNA polymerase complex. Zn(2+) is required as a cofactor.

It is found in the cytoplasm. The enzyme catalyses RNA(n) + a ribonucleoside 5'-triphosphate = RNA(n+1) + diphosphate. In terms of biological role, DNA-dependent RNA polymerase (RNAP) catalyzes the transcription of DNA into RNA using the four ribonucleoside triphosphates as substrates. The protein is DNA-directed RNA polymerase subunit Rpo12 of Pyrobaculum neutrophilum (strain DSM 2338 / JCM 9278 / NBRC 100436 / V24Sta) (Thermoproteus neutrophilus).